Here is a 295-residue protein sequence, read N- to C-terminus: Dipeptide transport system permease protein DppC (295 aa).

The next 7 membrane-spanning stretches (helical) occupy residues 27–47 (ALIGLIFILIVALISILAPYI), 97–117 (VFAGFIIVLLSCAFGTSLGLI), 132–152 (LIDIMLAIPNLLLTIVVVSIL), 156–178 (LANATLAIAVVSIPSYVRLTRAA), 202–222 (MFIVILPNCLAPLIVQMTMGI), 226–246 (ILELATLGFLGIGAKPPTPEL), and 262–282 (WLVTIPGLVILSLVLAFNLMG). The 190-residue stretch at 93–282 (TRISVFAGFI…SLVLAFNLMG (190 aa)) folds into the ABC transmembrane type-1 domain.

It belongs to the binding-protein-dependent transport system permease family. OppBC subfamily.

The protein localises to the cell inner membrane. Functionally, part of the ABC transporter DppBCDF involved in dipeptide transport. Responsible for the translocation of the substrate across the membrane. The sequence is that of Dipeptide transport system permease protein DppC (dppC) from Haemophilus influenzae (strain ATCC 51907 / DSM 11121 / KW20 / Rd).